The sequence spans 902 residues: Glutamate receptor 4 (902 aa).

The first 20 residues, 1–20, serve as a signal peptide directing secretion; it reads MRIICRQIVLLFSGFWGLAM. Topologically, residues 22–544 are extracellular; the sequence is AFPSSVQIGG…GVFSFLDPLA (523 aa). Asparagine 52, asparagine 56, asparagine 258, asparagine 371, asparagine 407, and asparagine 414 each carry an N-linked (GlcNAc...) asparagine glycan. Cysteine 84 and cysteine 331 are disulfide-bonded. L-glutamate is bound by residues proline 500, threonine 502, and arginine 507. The chain crosses the membrane as a helical span at residues 545-565; the sequence is YEIWMCIVFAYIGVSVVLFLV. Topologically, residues 566–592 are cytoplasmic; sequence SRFSPYEWHTEEPEDGKEGPSDQPPNE. Residues 593–608 constitute an intramembrane region (helical; Pore-forming); sequence FGIFNSLWFSLGAFMQ. An intramembrane segment occupies 609 to 611; that stretch reads QGC. A lipid anchor (S-palmitoyl cysteine) is attached at cysteine 611. Over 612–617 the chain is Cytoplasmic; it reads DISPRS. Residues 618–638 form a helical membrane-spanning segment; the sequence is LSGRIVGGVWWFFTLIIISSY. Over 639–813 the chain is Extracellular; it reads TANLAAFLTV…DKTSALSLSN (175 aa). L-glutamate is bound by residues serine 676, threonine 677, and glutamate 727. A disulfide bridge connects residues cysteine 740 and cysteine 795. Residues 814-834 form a helical membrane-spanning segment; that stretch reads VAGVFYILVGGLGLAMLVALI. Residues 835-902 are Cytoplasmic-facing; sequence EFCYKSRAEA…GLAVIASDLP (68 aa). Cysteine 837 is lipidated: S-palmitoyl cysteine. Serine 862 carries the phosphoserine; by PKC/PRKCG modification.

It belongs to the glutamate-gated ion channel (TC 1.A.10.1) family. GRIA4 subfamily. Homotetramer or heterotetramer of pore-forming glutamate receptor subunits. Tetramers may be formed by the dimerization of dimers. Interacts with EPB41L1 via its C-terminus. Isoform 3 interacts with PICK1. Found in a complex with GRIA1, GRIA2, GRIA3, CNIH2, CNIH3, CACNG2, CACNG3, CACNG4, CACNG5, CACNG7 and CACNG8. Interacts with CACNG5 and PRKCG. Found in a complex with GRIA1, GRIA2, GRIA3, DLG4, CACNG8 and CNIH2. In terms of processing, palmitoylated. Depalmitoylated upon L-glutamate stimulation. ZDHHC3/GODZ specifically palmitoylates Cys-611, which leads to Golgi retention and decreased cell surface expression. In contrast, Cys-837 palmitoylation does not affect cell surface expression but regulates stimulation-dependent endocytosis. Phosphorylated at Ser-862 by PRKCG; phosphorylation increases plasma membrane-associated GRI4 expression. Detected in cerebellum.

The protein localises to the cell membrane. It is found in the postsynaptic cell membrane. It localises to the cell projection. Its subcellular location is the dendrite. It carries out the reaction Ca(2+)(in) = Ca(2+)(out). The catalysed reaction is Na(+)(in) = Na(+)(out). The enzyme catalyses Mg(2+)(in) = Mg(2+)(out). In terms of biological role, ionotropic glutamate receptor that functions as a ligand-gated cation channel, gated by L-glutamate and glutamatergic agonists such as alpha-amino-3-hydroxy-5-methyl-4-isoxazolepropionic acid (AMPA), quisqualic acid, and kainic acid. L-glutamate acts as an excitatory neurotransmitter at many synapses in the central nervous system and plays an important role in fast excitatory synaptic transmission. Binding of the excitatory neurotransmitter L-glutamate induces a conformation change, leading to the opening of the cation channel, and thereby converts the chemical signal to an electrical impulse upon entry of monovalent and divalent cations such as sodium and calcium. The receptor then desensitizes rapidly and enters a transient inactive state, characterized by the presence of bound agonist. In the presence of CACNG8, shows resensitization which is characterized by a delayed accumulation of current flux upon continued application of L-glutamate. This chain is Glutamate receptor 4, found in Rattus norvegicus (Rat).